The following is a 230-amino-acid chain: 7-cyano-7-deazaguanine synthase (230 aa).

8–18 contacts ATP; it reads FSGGQDSTTCL. Zn(2+) is bound by residues C187, C196, C199, and C202.

The protein belongs to the QueC family. Requires Zn(2+) as cofactor.

It carries out the reaction 7-carboxy-7-deazaguanine + NH4(+) + ATP = 7-cyano-7-deazaguanine + ADP + phosphate + H2O + H(+). Its pathway is purine metabolism; 7-cyano-7-deazaguanine biosynthesis. Functionally, catalyzes the ATP-dependent conversion of 7-carboxy-7-deazaguanine (CDG) to 7-cyano-7-deazaguanine (preQ(0)). This is 7-cyano-7-deazaguanine synthase from Shewanella amazonensis (strain ATCC BAA-1098 / SB2B).